A 358-amino-acid chain; its full sequence is Glutamine synthetase (358 aa).

Residues 26–105 (ILAEYIWIDG…VLAECWNADG (80 aa)) form the GS beta-grasp domain. The GS catalytic domain occupies 112–358 (HRHECAKIME…IMMETICGGI (247 aa)).

It belongs to the glutamine synthetase family. In terms of assembly, homooctamer.

It localises to the cytoplasm. The catalysed reaction is L-glutamate + NH4(+) + ATP = L-glutamine + ADP + phosphate + H(+). The polypeptide is Glutamine synthetase (GLN1) (Tuber borchii (White truffle)).